The sequence spans 332 residues: Protein pbn1 (332 aa).

Residues 1-301 (MDLQRTNQDT…SIPIADLSYK (301 aa)) are Lumenal-facing. N-linked (GlcNAc...) asparagine glycosylation is found at Asn-36, Asn-56, Asn-112, and Asn-206. A helical membrane pass occupies residues 302–324 (HVVEWVTNGVAIFSFFYLLLYLW). Residues 325–332 (KRFRYAKD) lie on the Cytoplasmic side of the membrane.

Belongs to the PIGX family.

It localises to the endoplasmic reticulum membrane. It participates in glycolipid biosynthesis; glycosylphosphatidylinositol-anchor biosynthesis. Its function is as follows. Required for proper folding and/or the stability of a subset of proteins in the endoplasmic reticulum. Component of glycosylphosphatidylinositol-mannosyltransferase 1 which transfers the first of the 4 mannoses in the GPI-anchor precursors during GPI-anchor biosynthesis. Probably acts by stabilizing the mannosyltransferase gpi14. The chain is Protein pbn1 (pbn1) from Schizosaccharomyces pombe (strain 972 / ATCC 24843) (Fission yeast).